Here is an 89-residue protein sequence, read N- to C-terminus: Small ribosomal subunit protein bS16 (89 aa).

The protein belongs to the bacterial ribosomal protein bS16 family.

This chain is Small ribosomal subunit protein bS16, found in Desulforamulus reducens (strain ATCC BAA-1160 / DSM 100696 / MI-1) (Desulfotomaculum reducens).